We begin with the raw amino-acid sequence, 532 residues long: MLLQAFLFLLAGFAAKISASMTNETSDRPLVHFTPNKGWMNDPNGLWYDAKEGKWHLYFQYNPNDTVWGLPLFWGHATSDDLTHWQDEPVAIAPKRKDSGAYSGSMVIDYNNTSGFFNDTIDPRQRCVAIWTYNTPESEEQYISYSLDGGYTFTEYQKNPVLAANSTQFRDPKVFWYEPSKKWIMTAAKSQDYKIEIYSSDDLKSWKLESAFANEGFLGYQYECPGLIEVPSEQDPSKSHWVMFISINPGAPAGGSFNQYFVGSFNGHHFEAFDNQSRVVDFGKDYYALQTFFNTDPTYGSALGIAWASNWEYSAFVPSNPWRSSMSLVRPFSLNTEYQANPETELINLKAEPILNISSAGPWSRFATNTTLTKANSYNVDLSNSTGTLEFELVYAVNTTQTISKSVFADLSLWFKGLEDPEEYLRMGFEVSASSFFLDRGNSKVKFVKENPYFTNRMSVNNQPFKSENDLSYYKVYGLLDQNILELYFNDGDVVSTNTYFMTTGNALGSVNMTTGVDNLFYIDKFQVREVK.

An N-terminal signal peptide occupies residues 1 to 19; the sequence is MLLQAFLFLLAGFAAKISA. N23 is a glycosylation site (N-linked (GlcNAc...) asparagine). Substrate-binding positions include 39–42 and Q60; that span reads WMND. Residue D42 is part of the active site. An N-linked (GlcNAc...) asparagine glycan is attached at N64. 102-103 contributes to the substrate binding site; it reads YS. N-linked (GlcNAc...) asparagine glycosylation is found at N111, N112, N118, and N165. Residues 170–171 and E223 contribute to the substrate site; that span reads RD. N-linked (GlcNAc...) asparagine glycosylation is present at N275. Residue W311 coordinates substrate. N-linked (GlcNAc...) asparagine glycosylation is found at N356, N369, N384, N398, and N512.

The protein belongs to the glycosyl hydrolase 32 family. In terms of processing, isoform Secreted is glycosylated. Isoform Intracellular is not glycosylated.

The protein resides in the cytoplasm. Its subcellular location is the secreted. It catalyses the reaction Hydrolysis of terminal non-reducing beta-D-fructofuranoside residues in beta-D-fructofuranosides.. The chain is Invertase 1 (SUC1) from Saccharomyces cerevisiae (Baker's yeast).